Consider the following 259-residue polypeptide: Small ribosomal subunit protein uS2 (259 aa).

The protein belongs to the universal ribosomal protein uS2 family.

This is Small ribosomal subunit protein uS2 from Dinoroseobacter shibae (strain DSM 16493 / NCIMB 14021 / DFL 12).